The following is a 1516-amino-acid chain: Receptor-type tyrosine-protein phosphatase S (1516 aa).

The N-terminal stretch at 1–28 (MRILPSPGMPALLSLVSLLSVLLMGCVA) is a signal peptide. Topologically, residues 29–854 (ESPPVFIKKP…PQPIIDGEEG (826 aa)) are extracellular. Ig-like C2-type domains follow at residues 32–122 (PVFI…AKLT), 134–223 (PNID…ANLY), and 235–317 (PRFS…AQIT). 2 cysteine pairs are disulfide-bonded: Cys53–Cys106 and Cys155–Cys206. The important for binding to glycosaminoglycan chains stretch occupies residues 67–71 (KKGKK). N-linked (GlcNAc...) asparagine glycans are attached at residues Asn253 and Asn298. Cys256 and Cys301 are joined by a disulfide. 4 consecutive Fibronectin type-III domains span residues 324–414 (APGT…TGEQ), 419–513 (APRN…TQQG), 517–606 (QPMN…TLQS), and 608–692 (LPKN…TAAN). The helical transmembrane segment at 855 to 875 (LIWVIGPVLAVVFIICIVIAI) threads the bilayer. Residues 876 to 1516 (LLYKNKRKDS…YLGSFDHYAT (641 aa)) are Cytoplasmic-facing. Tyrosine-protein phosphatase domains follow at residues 961 to 1216 (LSQE…LLEA) and 1248 to 1507 (MELE…ALEY). Residues Cys1157 and Cys1448 each act as phosphocysteine intermediate in the active site.

The protein belongs to the protein-tyrosine phosphatase family. Receptor class 2A subfamily. Homodimer. Binding to large heparan sulfate proteoglycan structures promotes oligomerization. Binding to chondroitin sulfate proteoglycan does not lead to oligomerization. Interacts (via Ig-like domains) with NTRK1 and NTRK3, but does not form detectable complexes with NTRK2. Interacts (via extracellular domain) with the heparan sulfate proteoglycans AGRN and COL18A1. Post-translationally, a cleavage occurs, separating the extracellular domain from the transmembrane segment. This process called 'ectodomain shedding' is thought to be involved in receptor desensitization, signal transduction and/or membrane localization. Detected in embryonic brain, dorsal root ganglion and spinal cord. Detected in embryonic retina (at protein level). Detected in embryonic brain, spinal cord, dorsal root ganglion, trigeminal ganglion, ganglia associated with the precardinal vein and vagus nerve, the inner and outer nuclear layer of the retina, limb, breast muscle, heart, gut and lung.

It is found in the cell membrane. Its subcellular location is the cell projection. It localises to the axon. The protein localises to the perikaryon. The protein resides in the cytoplasmic vesicle. It is found in the secretory vesicle. Its subcellular location is the synaptic vesicle membrane. It localises to the synapse. The protein localises to the synaptosome. The protein resides in the postsynaptic density. It is found in the neuron projection. Its subcellular location is the growth cone. It catalyses the reaction O-phospho-L-tyrosyl-[protein] + H2O = L-tyrosyl-[protein] + phosphate. In terms of biological role, cell surface receptor that binds to glycosaminoglycans, including chondroitin sulfate proteoglycans and heparan sulfate proteoglycans. Binding to chondroitin sulfate and heparan sulfate proteoglycans has opposite effects on PTPRS oligomerization and regulation of neurite outgrowth. Contributes to the inhibition of neurite and axonal outgrowth by chondroitin sulfate proteoglycans, also after nerve transection. Plays a role in stimulating neurite outgrowth in response to the heparan sulfate proteoglycan GPC2. Required for normal brain development, especially for normal development of the pituitary gland and the olfactory bulb. Functions as tyrosine phosphatase. Mediates dephosphorylation of NTRK1, NTRK2 and NTRK3. Plays a role in down-regulation of signaling cascades that lead to the activation of Akt and MAP kinases. Down-regulates TLR9-mediated activation of NF-kappa-B, as well as production of TNF, interferon alpha and interferon beta. The sequence is that of Receptor-type tyrosine-protein phosphatase S (PTPRS) from Gallus gallus (Chicken).